The primary structure comprises 420 residues: Glutamyl-tRNA reductase (420 aa).

Residues 49–52 (TCNR), Ser109, 114–116 (EPQ), and Gln120 each bind substrate. The Nucleophile role is filled by Cys50. Residue 189–194 (GAGETI) coordinates NADP(+).

The protein belongs to the glutamyl-tRNA reductase family. Homodimer.

It carries out the reaction (S)-4-amino-5-oxopentanoate + tRNA(Glu) + NADP(+) = L-glutamyl-tRNA(Glu) + NADPH + H(+). The protein operates within porphyrin-containing compound metabolism; protoporphyrin-IX biosynthesis; 5-aminolevulinate from L-glutamyl-tRNA(Glu): step 1/2. In terms of biological role, catalyzes the NADPH-dependent reduction of glutamyl-tRNA(Glu) to glutamate 1-semialdehyde (GSA). This chain is Glutamyl-tRNA reductase, found in Edwardsiella ictaluri (strain 93-146).